A 562-amino-acid chain; its full sequence is Cytosolic invertase 1 (562 aa).

This sequence belongs to the glycosyl hydrolase 100 family.

The protein localises to the cytoplasm. It is found in the cytosol. The enzyme catalyses Hydrolysis of terminal non-reducing beta-D-fructofuranoside residues in beta-D-fructofuranosides.. Its function is as follows. Cytosolic invertase that cleaves sucrose into glucose and fructose and is involved in the regulation of primary root elongation, lateral root formation, floral transition and pollen development. The sequence is that of Cytosolic invertase 1 from Oryza sativa subsp. japonica (Rice).